The chain runs to 579 residues: ERV-BabFcenv provirus ancestral Env polyprotein (579 aa).

A signal peptide spans 1–22 (MISAVLNLPSTPLLPLLWFTLI). The segment at 23 to 387 (IPASLTNPKF…LSSSNNIQKQ (365 aa)) is surface protein. The Extracellular segment spans residues 23-523 (IPASLTNPKF…VWLLPVVQQM (501 aa)). N-linked (GlcNAc...) asparagine glycosylation is found at Asn-135, Asn-203, Asn-242, and Asn-251. Positions 255-258 (CFLC) match the CXXC motif. Residues Asn-276, Asn-312, and Asn-337 are each glycosylated (N-linked (GlcNAc...) asparagine). The interval 388-408 (AVFLPLIIGVSLASSLVASGL) is fusion peptide. The transmembrane protein stretch occupies residues 388–579 (AVFLPLIIGV…LPTSDPNYAP (192 aa)). The short motif at 453-469 (AQNRRALDLLTAEKGGT) is the CKS-17 element. Cys-470 and Cys-477 are disulfide-bonded. Residues 470 to 478 (CLFLGEECC) carry the CX6CC motif. An N-linked (GlcNAc...) asparagine glycan is attached at Asn-482. Residues 524–544 (LPFLIPILILCLMLCLAPILI) form a helical membrane-spanning segment. At 545–579 (KFLRARVQEITRVTFNQMLLHPYTQLPTSDPNYAP) the chain is on the cytoplasmic side.

Belongs to the gamma type-C retroviral envelope protein family. HERV class-I F(c)1 env subfamily. In terms of processing, specific enzymatic cleavages in vivo yield the mature SU and TM proteins. The CXXC motif is highly conserved across a broad range of retroviral envelope proteins. It is thought to participate in the formation of a labile disulfide bond possibly with the CX6CC motif present in the transmembrane domain.

It localises to the cell membrane. Functionally, retroviral envelope proteins mediate receptor recognition and membrane fusion during early infection. Endogenous envelope proteins may have kept, lost or modified their original function during evolution. The protein is ERV-BabFcenv provirus ancestral Env polyprotein of Papio anubis (Olive baboon).